Here is a 489-residue protein sequence, read N- to C-terminus: Metalloreductase STEAP2 (489 aa).

NADP(+) contacts are provided by residues 37-40, 59-60, 92-99, Asn117, and Ala150; these read SGDF, SR, and IHREHYTS. Positions 151 and 159 each coordinate FAD. The chain crosses the membrane as a helical span at residues 207-227; that stretch reads LFTLWRGPVVVAISLATFFFL. Residue Tyr228 participates in Fe(3+) binding. A helical membrane pass occupies residues 258–278; it reads LPIVAITLLSLVYLAGLLAAA. In terms of domain architecture, Ferric oxidoreductase spans 258–406; the sequence is LPIVAITLLS…LGYVALLITT (149 aa). FAD contacts are provided by Gln280 and Arg301. 4 consecutive transmembrane segments (helical) span residues 304 to 324, 358 to 378, 392 to 412, and 431 to 451; these read LGLLSFFFAVVHVAYSLCLPM, MYISFGIMSLGLLSLLAVTSI, FIQSTLGYVALLITTFHVLIY, and FVLALVLPSIVILGKMILLLP. His315 contributes to the heme b binding site. Tyr318 contributes to the Fe(3+) binding site. FAD contacts are provided by Ser377 and Gln394. His408 serves as a coordination point for heme b. The residue at position 482 (Ser482) is a Phosphoserine.

The protein belongs to the STEAP family. It depends on FAD as a cofactor. The cofactor is heme b.

It localises to the cell membrane. The protein resides in the endosome membrane. The enzyme catalyses 2 Fe(2+) + NADP(+) + H(+) = 2 Fe(3+) + NADPH. The catalysed reaction is 2 Cu(+) + NADP(+) + H(+) = 2 Cu(2+) + NADPH. In terms of biological role, integral membrane protein that functions as a NADPH-dependent ferric-chelate reductase, using NADPH from one side of the membrane to reduce a Fe(3+) chelate that is bound on the other side of the membrane. Mediates sequential transmembrane electron transfer from NADPH to FAD and onto heme, and finally to the Fe(3+) chelate. Can also reduce Cu(2+) to Cu(1+). This is Metalloreductase STEAP2 (Steap2) from Mus musculus (Mouse).